A 485-amino-acid chain; its full sequence is Aerolysin-5 (485 aa).

Positions 1–23 (MQKLKITGLSLIISGLLMAQRHA) are cleaved as a signal peptide. Disulfide bonds link cysteine 42–cysteine 98 and cysteine 182–cysteine 187. The interaction with host N-linked glycan stretch occupies residues 68–84 (WQISGLANGWVIMGPVY). The interval 256–288 (YGLSEKVTTKNKFKWPLVGETELSIEIAANQSW) is part of the transmembrane beta-barrel after proteolytic activation of the toxin and insertion into the host membrane. The segment at 346-355 (RWGGNAWYTH) is interaction with glycans from host GPI-anchor. The propeptide occupies 446 to 485 (AADGKAPRALSARRGEQGLRLAIPLECRKSSPGLASATSA).

Belongs to the aerolysin family. Homodimer in solution; homoheptamer in the host membrane. After binding to GPI-anchored proteins in target membranes and proteolytic removal of the C-terminal propeptide, the protein assembles into a heptameric pre-pore complex. A further conformation change leads to insertion into the host membrane. Post-translationally, proteolytic cleavage and subsequent release of the propeptide trigger a major conformation change, leading to the formation of a heptameric pre-pore that then inserts into the host membrane.

It localises to the secreted. It is found in the host cell membrane. Functionally, secreted, cytolytic toxin that forms pores in host membranes after proteolytic removal of a C-terminal propeptide, leading to destruction of the membrane permeability barrier and cell death. The pores are formed by transmembrane beta-strands and are approximately 3 nm in diameter. The sequence is that of Aerolysin-5 (ahh5) from Aeromonas hydrophila.